Here is a 466-residue protein sequence, read N- to C-terminus: UDP-N-acetylmuramoylalanine--D-glutamate ligase (466 aa).

Position 127 to 133 (127 to 133) interacts with ATP; that stretch reads GSNGKST.

Belongs to the MurCDEF family.

It localises to the cytoplasm. The catalysed reaction is UDP-N-acetyl-alpha-D-muramoyl-L-alanine + D-glutamate + ATP = UDP-N-acetyl-alpha-D-muramoyl-L-alanyl-D-glutamate + ADP + phosphate + H(+). It participates in cell wall biogenesis; peptidoglycan biosynthesis. Functionally, cell wall formation. Catalyzes the addition of glutamate to the nucleotide precursor UDP-N-acetylmuramoyl-L-alanine (UMA). The sequence is that of UDP-N-acetylmuramoylalanine--D-glutamate ligase from Ruegeria pomeroyi (strain ATCC 700808 / DSM 15171 / DSS-3) (Silicibacter pomeroyi).